The following is a 254-amino-acid chain: Imidazole glycerol phosphate synthase subunit HisF (254 aa).

Active-site residues include Asp12 and Asp132.

This sequence belongs to the HisA/HisF family. As to quaternary structure, heterodimer of HisH and HisF.

It is found in the cytoplasm. It carries out the reaction 5-[(5-phospho-1-deoxy-D-ribulos-1-ylimino)methylamino]-1-(5-phospho-beta-D-ribosyl)imidazole-4-carboxamide + L-glutamine = D-erythro-1-(imidazol-4-yl)glycerol 3-phosphate + 5-amino-1-(5-phospho-beta-D-ribosyl)imidazole-4-carboxamide + L-glutamate + H(+). The protein operates within amino-acid biosynthesis; L-histidine biosynthesis; L-histidine from 5-phospho-alpha-D-ribose 1-diphosphate: step 5/9. Functionally, IGPS catalyzes the conversion of PRFAR and glutamine to IGP, AICAR and glutamate. The HisF subunit catalyzes the cyclization activity that produces IGP and AICAR from PRFAR using the ammonia provided by the HisH subunit. In Symbiobacterium thermophilum (strain DSM 24528 / JCM 14929 / IAM 14863 / T), this protein is Imidazole glycerol phosphate synthase subunit HisF.